We begin with the raw amino-acid sequence, 315 residues long: PIH1 domain-containing protein 2 (315 aa).

The protein belongs to the PIH1 family.

The sequence is that of PIH1 domain-containing protein 2 (PIH1D2) from Homo sapiens (Human).